Consider the following 206-residue polypeptide: Charged multivesicular body protein 6 (206 aa).

Gly-2 is lipidated: N-myristoyl glycine. Positions 11-103 form a coiled coil; that stretch reads TRVTEQDRAV…AQIEMKVIEG (93 aa). Positions 167–206 are disordered; sequence EADLELPEVPGEELPEVPEQEPVREKERVKKKPEREMVAV. Residues 168–185 show a composition bias toward acidic residues; it reads ADLELPEVPGEELPEVPE. The Type-2 MIT-interacting motif motif lies at 170-181; sequence LELPEVPGEELP. Residues 187–206 are compositionally biased toward basic and acidic residues; sequence EPVREKERVKKKPEREMVAV.

Belongs to the SNF7 family. As to quaternary structure, probable core component of the endosomal sorting required for transport complex III (ESCRT-III). ESCRT-III components are thought to multimerize to form a flat lattice on the perimeter membrane of the endosome.

The protein resides in the endomembrane system. The protein localises to the late endosome membrane. Functionally, probable core component of the endosomal sorting required for transport complex III (ESCRT-III) which is involved in multivesicular bodies (MVBs) formation and sorting of endosomal cargo proteins into MVBs. MVBs contain intraluminal vesicles (ILVs) that are generated by invagination and scission from the limiting membrane of the endosome and mostly are delivered to lysosomes enabling degradation of membrane proteins, such as stimulated growth factor receptors, lysosomal enzymes and lipids. In the ESCRT-III complex, it probably serves as an acceptor for the ESCRT-II complex on endosomal membranes. The sequence is that of Charged multivesicular body protein 6 (chmp6) from Danio rerio (Zebrafish).